The sequence spans 572 residues: Phosphoenolpyruvate-protein phosphotransferase (572 aa).

Histidine 191 serves as the catalytic Tele-phosphohistidine intermediate. Phosphoenolpyruvate is bound by residues arginine 298 and arginine 334. Mg(2+)-binding residues include glutamate 433 and aspartate 457. Phosphoenolpyruvate is bound by residues 456 to 457 (ND) and arginine 467. The active-site Proton donor is cysteine 504.

This sequence belongs to the PEP-utilizing enzyme family. Homodimer. Requires Mg(2+) as cofactor.

Its subcellular location is the cytoplasm. The enzyme catalyses L-histidyl-[protein] + phosphoenolpyruvate = N(pros)-phospho-L-histidyl-[protein] + pyruvate. Functionally, general (non sugar-specific) component of the phosphoenolpyruvate-dependent sugar phosphotransferase system (sugar PTS). This major carbohydrate active-transport system catalyzes the phosphorylation of incoming sugar substrates concomitantly with their translocation across the cell membrane. Enzyme I transfers the phosphoryl group from phosphoenolpyruvate (PEP) to the phosphoryl carrier protein (HPr). The polypeptide is Phosphoenolpyruvate-protein phosphotransferase (ptsI) (Staphylococcus aureus (strain COL)).